Here is a 357-residue protein sequence, read N- to C-terminus: Transactivator protein DR7 (357 aa).

The interaction with host p53 stretch occupies residues 107-187; the sequence is LVGKDGAVYV…LLTVGGLCQT (81 aa).

Belongs to the herpesviridae US22 family. In terms of assembly, interacts with host p53 and inhibits p53-activated transcription.

Functionally, involved in transactivation. Displays transforming activity. This chain is Transactivator protein DR7 (DR7L), found in Homo sapiens (Human).